A 122-amino-acid chain; its full sequence is T-cell receptor beta chain V region C5 (122 aa).

The signal sequence occupies residues 1 to 7; the sequence is ILLCAKH. The segment at 8–103 is v segment; sequence MEAAVTQSPR…TAVYFCASSG (96 aa). C31 and C99 form a disulfide bridge. Positions 104-108 are d segment; the sequence is TGGAL. A j segment region spans residues 109–122; the sequence is DTQYFGPGTRLLVL.

The sequence is that of T-cell receptor beta chain V region C5 from Mus musculus (Mouse).